Consider the following 554-residue polypeptide: Dihydroxy-acid dehydratase (554 aa).

Residue D78 participates in Mg(2+) binding. C119 contributes to the [2Fe-2S] cluster binding site. Residues D120 and K121 each coordinate Mg(2+). The residue at position 121 (K121) is an N6-carboxylysine. C191 serves as a coordination point for [2Fe-2S] cluster. E442 contributes to the Mg(2+) binding site. The Proton acceptor role is filled by S468.

This sequence belongs to the IlvD/Edd family. Homodimer. [2Fe-2S] cluster serves as cofactor. The cofactor is Mg(2+).

The enzyme catalyses (2R)-2,3-dihydroxy-3-methylbutanoate = 3-methyl-2-oxobutanoate + H2O. It carries out the reaction (2R,3R)-2,3-dihydroxy-3-methylpentanoate = (S)-3-methyl-2-oxopentanoate + H2O. Its pathway is amino-acid biosynthesis; L-isoleucine biosynthesis; L-isoleucine from 2-oxobutanoate: step 3/4. It functions in the pathway amino-acid biosynthesis; L-valine biosynthesis; L-valine from pyruvate: step 3/4. Functionally, functions in the biosynthesis of branched-chain amino acids. Catalyzes the dehydration of (2R,3R)-2,3-dihydroxy-3-methylpentanoate (2,3-dihydroxy-3-methylvalerate) into 2-oxo-3-methylpentanoate (2-oxo-3-methylvalerate) and of (2R)-2,3-dihydroxy-3-methylbutanoate (2,3-dihydroxyisovalerate) into 2-oxo-3-methylbutanoate (2-oxoisovalerate), the penultimate precursor to L-isoleucine and L-valine, respectively. In Thermotoga sp. (strain RQ2), this protein is Dihydroxy-acid dehydratase.